Consider the following 145-residue polypeptide: Large ribosomal subunit protein uL15 (145 aa).

The disordered stretch occupies residues 1–42 (MELHTLKATPGSRKAKHRVGRGHAAGKGKQAGRGQSGQTKRS). A compositionally biased stretch (basic residues) spans 13–26 (RKAKHRVGRGHAAG).

Belongs to the universal ribosomal protein uL15 family. Part of the 50S ribosomal subunit.

In terms of biological role, binds to the 23S rRNA. In Metamycoplasma arthritidis (strain 158L3-1) (Mycoplasma arthritidis), this protein is Large ribosomal subunit protein uL15.